Reading from the N-terminus, the 809-residue chain is uncharacterized protein (809 aa).

An MHYT domain is found at 19-206 (HDLRLVLVAS…FTGMSAITIV (188 aa)). 7 helical membrane-spanning segments follow: residues 23-43 (LVLV…RLYS), 57-77 (LLLT…IAMV), 92-112 (TLLS…VASA), 122-142 (GGVL…SAFV), 152-172 (ATVG…LLLA), 186-206 (GMLC…ITIV), and 224-244 (TLAV…AVAI). In terms of domain architecture, PAS spans 254 to 317 (ERIRRLANAA…ADPSREDVRR (64 aa)). The GGDEF domain occupies 402-536 (ESLAVICIDL…GRGVYRFFKR (135 aa)). An EAL domain is found at 545–795 (RRNLARDLRQ…ALTMWTTAGD (251 aa)).

Its subcellular location is the cell membrane. This is an uncharacterized protein from Caulobacter vibrioides (strain ATCC 19089 / CIP 103742 / CB 15) (Caulobacter crescentus).